We begin with the raw amino-acid sequence, 197 residues long: 3-isopropylmalate dehydratase small subunit (197 aa).

It belongs to the LeuD family. LeuD type 1 subfamily. As to quaternary structure, heterodimer of LeuC and LeuD.

It carries out the reaction (2R,3S)-3-isopropylmalate = (2S)-2-isopropylmalate. Its pathway is amino-acid biosynthesis; L-leucine biosynthesis; L-leucine from 3-methyl-2-oxobutanoate: step 2/4. Functionally, catalyzes the isomerization between 2-isopropylmalate and 3-isopropylmalate, via the formation of 2-isopropylmaleate. The chain is 3-isopropylmalate dehydratase small subunit from Streptomyces griseus subsp. griseus (strain JCM 4626 / CBS 651.72 / NBRC 13350 / KCC S-0626 / ISP 5235).